We begin with the raw amino-acid sequence, 102 residues long: Small ribosomal subunit protein uS10 (102 aa).

The protein belongs to the universal ribosomal protein uS10 family. In terms of assembly, part of the 30S ribosomal subunit.

Functionally, involved in the binding of tRNA to the ribosomes. The chain is Small ribosomal subunit protein uS10 from Nitrosomonas eutropha (strain DSM 101675 / C91 / Nm57).